Here is an 80-residue protein sequence, read N- to C-terminus: DNA-binding protein HU-like (80 aa).

This sequence belongs to the bacterial histone-like protein family.

Its function is as follows. Histone-like DNA-binding protein which is capable of wrapping DNA to stabilize it, and thus to prevent its denaturation under extreme environmental conditions. The sequence is that of DNA-binding protein HU-like from Rickettsia prowazekii (strain Madrid E).